Here is a 263-residue protein sequence, read N- to C-terminus: Endonuclease 8 (263 aa).

The active-site Schiff-base intermediate with DNA is the P2. E3 functions as the Proton donor in the catalytic mechanism. Catalysis depends on K53, which acts as the Proton donor; for beta-elimination activity. DNA-binding residues include Q70, R125, and N169. The segment at 229-263 (KVFHRDGEACERCGGIIEKTTLSSRPFYWCPHCQK) adopts an FPG-type zinc-finger fold. Catalysis depends on R253, which acts as the Proton donor; for delta-elimination activity.

The protein belongs to the FPG family. Requires Zn(2+) as cofactor.

It catalyses the reaction 2'-deoxyribonucleotide-(2'-deoxyribose 5'-phosphate)-2'-deoxyribonucleotide-DNA = a 3'-end 2'-deoxyribonucleotide-(2,3-dehydro-2,3-deoxyribose 5'-phosphate)-DNA + a 5'-end 5'-phospho-2'-deoxyribonucleoside-DNA + H(+). In terms of biological role, involved in base excision repair of DNA damaged by oxidation or by mutagenic agents. Acts as a DNA glycosylase that recognizes and removes damaged bases. Has a preference for oxidized pyrimidines, such as thymine glycol, 5,6-dihydrouracil and 5,6-dihydrothymine. Has AP (apurinic/apyrimidinic) lyase activity and introduces nicks in the DNA strand. Cleaves the DNA backbone by beta-delta elimination to generate a single-strand break at the site of the removed base with both 3'- and 5'-phosphates. In Salmonella heidelberg (strain SL476), this protein is Endonuclease 8.